We begin with the raw amino-acid sequence, 375 residues long: GDSL esterase/lipase At5g45960 (375 aa).

Positions 1–28 (MRSHHRHFSSYVSFILFLFLFFISFSSS) are cleaved as a signal peptide. S54 functions as the Nucleophile in the catalytic mechanism. N340 is a glycosylation site (N-linked (GlcNAc...) asparagine). Catalysis depends on residues D348 and H351.

It belongs to the 'GDSL' lipolytic enzyme family.

The protein resides in the secreted. The polypeptide is GDSL esterase/lipase At5g45960 (Arabidopsis thaliana (Mouse-ear cress)).